A 285-amino-acid polypeptide reads, in one-letter code: VQ motif-containing protein 20 (285 aa).

Basic and acidic residues predominate over residues 1–10 (MSSTYKDNHP). Residues 1 to 68 (MSSTYKDNHP…PSPSSFSSAA (68 aa)) form a disordered region. Residues 11–23 (YHHHPHHHHHHPK) are compositionally biased toward basic residues. The short motif at 91 to 100 (FMALVQKLTG) is the VQ element. Positions 195 to 218 (YSAVAIPPQPPPHPPPPPPPPSMY) are disordered. A compositionally biased stretch (pro residues) spans 201 to 216 (PPQPPPHPPPPPPPPS).

Its subcellular location is the nucleus. May function as negative regulator of plant defense. The polypeptide is VQ motif-containing protein 20 (Arabidopsis thaliana (Mouse-ear cress)).